A 242-amino-acid chain; its full sequence is Myb-related protein MYBAS2 (242 aa).

2 HTH myb-type domains span residues 5–61 (REEI…HPGL) and 62–112 (KRGR…RKKA). The segment at residues 33–57 (WDFIAKVSGLNRTGKSCRLRWVNYL) is a DNA-binding region (H-T-H motif). The Bipartite nuclear localization signal 1 signature appears at 62-65 (KRGR). The H-T-H motif DNA-binding region spans 85–108 (WSRIARRLPGRTDNEIKNYWRTHM). The short motif at 109 to 117 (RKKAQERKS) is the Bipartite nuclear localization signal 2 element. The segment at 110 to 133 (KKAQERKSNMSPSSSSSSLTYQSC) is disordered. The segment covering 118 to 133 (NMSPSSSSSSLTYQSC) has biased composition (low complexity).

It is found in the nucleus. Functionally, transcription factor. This is Myb-related protein MYBAS2 (MYBAS2) from Oryza sativa subsp. japonica (Rice).